An 864-amino-acid chain; its full sequence is Translation initiation factor IF-2 (864 aa).

Residues 1–252 (MEDKNKTIKE…KTSSDKRDFS (252 aa)) form a disordered region. Residues 78-90 (KEVKYEESSRKQD) are compositionally biased toward basic and acidic residues. Residues 106-120 (VRPSGDSSYPVSRSP) are compositionally biased toward polar residues. Residues 150 to 212 (RGPGQGGGYQ…PGNRSGGPGG (63 aa)) are compositionally biased toward gly residues. A compositionally biased stretch (basic and acidic residues) spans 239–252 (HDKEKTSSDKRDFS). Residues 359–528 (NRPPVVTIMG…LLQAEVMDLK (170 aa)) form the tr-type G domain. The tract at residues 368 to 375 (GHVDHGKT) is G1. 368-375 (GHVDHGKT) provides a ligand contact to GTP. Residues 393–397 (GITQH) are G2. Positions 414 to 417 (DTPG) are G3. Residues 414 to 418 (DTPGH) and 468 to 471 (NKID) contribute to the GTP site. The segment at 468–471 (NKID) is G4. The interval 504–506 (SAR) is G5.

It belongs to the TRAFAC class translation factor GTPase superfamily. Classic translation factor GTPase family. IF-2 subfamily.

Its subcellular location is the cytoplasm. In terms of biological role, one of the essential components for the initiation of protein synthesis. Protects formylmethionyl-tRNA from spontaneous hydrolysis and promotes its binding to the 30S ribosomal subunits. Also involved in the hydrolysis of GTP during the formation of the 70S ribosomal complex. This is Translation initiation factor IF-2 from Leptospira borgpetersenii serovar Hardjo-bovis (strain L550).